Here is a 158-residue protein sequence, read N- to C-terminus: Na(+)/H(+) antiporter subunit E (158 aa).

The next 2 helical transmembrane spans lie at 22–41 (YTAV…LFVL) and 54–76 (IWAI…IDVI).

The protein belongs to the CPA3 antiporters (TC 2.A.63) subunit E family. Forms a heterooligomeric complex that consists of seven subunits: MrpA, MrpB, MrpC, MrpD, MrpE, MrpF and MrpG.

It is found in the cell membrane. Its function is as follows. Mnh complex is a Na(+)Li(+)/H(+) antiporter involved in Na(+) and/or Li(+) excretion and Na(+) resistance. Na(+)/H(+) antiport consumes a transmembrane electrical potential, and is thus inferred to be electrogenic. Does not transport K(+), Ca(2+) or Mg(2+). In terms of biological role, mrp complex is a Na(+)/H(+) antiporter involved in Na(+) excretion and Na(+) resistance. In Alkalihalophilus pseudofirmus (strain ATCC BAA-2126 / JCM 17055 / OF4) (Bacillus pseudofirmus), this protein is Na(+)/H(+) antiporter subunit E (mrpE).